The primary structure comprises 644 residues: Chaperone protein DnaK (644 aa).

Phosphothreonine; by autocatalysis is present on T195. The tract at residues 598–644 (KQAAPGAGAPGAGPGPEAAGGAQQAQAEPKKDEGVIDAEYVDVDEKK) is disordered. The segment covering 612-624 (GPEAAGGAQQAQA) has biased composition (low complexity). A compositionally biased stretch (acidic residues) spans 632-644 (VIDAEYVDVDEKK).

The protein belongs to the heat shock protein 70 family.

Acts as a chaperone. This is Chaperone protein DnaK from Koribacter versatilis (strain Ellin345).